A 352-amino-acid polypeptide reads, in one-letter code: uncharacterized protein (352 aa).

Residues 1–55 (MAMAALTSSSSAITLLNKPFLPNRSSFFSSDSQSPLLRFSASTSVRSRFPSAAIS) constitute a chloroplast transit peptide.

It belongs to the methyltransferase superfamily.

The protein resides in the plastid. Its subcellular location is the chloroplast. The protein localises to the plastoglobule. This is an uncharacterized protein from Arabidopsis thaliana (Mouse-ear cress).